Here is a 319-residue protein sequence, read N- to C-terminus: MATH domain and coiled-coil domain-containing protein At3g58200 (319 aa).

The 127-residue stretch at aspartate 6–valine 132 folds into the MATH domain. A coiled-coil region spans residues phenylalanine 255 to lysine 302.

The protein is MATH domain and coiled-coil domain-containing protein At3g58200 of Arabidopsis thaliana (Mouse-ear cress).